The chain runs to 1448 residues: Probable serine/threonine-protein kinase irlB (1448 aa).

Acidic residues predominate over residues 412 to 423 (DDDDYDDYDDDD). A disordered region spans residues 412–446 (DDDDYDDYDDDDDHHSGCNNNNNNNNDGDHNEDEN). Low complexity predominate over residues 428–437 (GCNNNNNNNN). 3 coiled-coil regions span residues 666–817 (AESE…EIQN), 887–921 (EIQL…SNMK), and 974–1016 (ENNK…QDED). The disordered stretch occupies residues 975-1008 (NNKKQNLINDNNNNNNNNNNNNNNNNNNNNNNKL). Residues 978–1008 (KQNLINDNNNNNNNNNNNNNNNNNNNNNNKL) show a composition bias toward low complexity. A Protein kinase domain is found at 1027–1293 (RNESNILGRG…IQNVLNHPLF (267 aa)). ATP-binding positions include 1033-1041 (LGRGSNGTL) and K1056. Catalysis depends on D1151, which acts as the Proton acceptor. Residues 1296 to 1448 (LEKKIQFIDA…TIDYLFNFYN (153 aa)) enclose the KEN domain.

It belongs to the protein kinase superfamily. Ser/Thr protein kinase family.

The catalysed reaction is L-seryl-[protein] + ATP = O-phospho-L-seryl-[protein] + ADP + H(+). It carries out the reaction L-threonyl-[protein] + ATP = O-phospho-L-threonyl-[protein] + ADP + H(+). The protein is Probable serine/threonine-protein kinase irlB (irlB-1) of Dictyostelium discoideum (Social amoeba).